The chain runs to 320 residues: Integrin-binding sialoprotein (320 aa).

Positions 1 to 16 (MKTALILLCILGMASA) are cleaved as a signal peptide. A phosphoserine mark is found at Ser-31, Ser-68, Ser-76, Ser-77, and Ser-96. Disordered regions lie at residues 60 to 117 (PVQG…VTAS), 136 to 225 (LPKK…RELT), and 238 to 264 (FQQTTPPPEAYGTTSPPARKSSTVEYG). Positions 67-106 (SSEENGDGDSSEEEGEEEETSNEEENNEDSEGNEDQEAEA) are enriched in acidic residues. N-linked (GlcNAc...) asparagine glycosylation is present at Asn-108. Basic and acidic residues predominate over residues 139-152 (KAGDAEGKAPKMKE). The residue at position 153 (Ser-153) is a Phosphoserine. Positions 153–176 (SDEEEEEEEEEENENEEAEVDENE) are enriched in acidic residues. 2 stretches are compositionally biased toward polar residues: residues 177–188 (QVVNGTSTNSTE) and 249–261 (GTTSPPARKSSTV). N-linked (GlcNAc...) asparagine glycosylation is found at Asn-180 and Asn-185. The Integrin-binding motif motif lies at 289–291 (RGD). Sulfotyrosine occurs at positions 316 and 317.

In terms of assembly, monomer. Interacts with integrins; the interaction promotes cell adhesion.

The protein resides in the secreted. Functionally, binds tightly to hydroxyapatite. Appears to form an integral part of the mineralized matrix. Probably important to cell-matrix interaction. Promotes adhesion and migration of various cells via the alpha-V/beta-3 integrin receptor (ITGAV:ITGB3). The chain is Integrin-binding sialoprotein (Ibsp) from Rattus norvegicus (Rat).